Consider the following 293-residue polypeptide: Glutamyl-Q tRNA(Asp) synthetase (293 aa).

L-glutamate is bound by residues 4–8 (RYAPS) and Glu40. Residues 7 to 17 (PSPSGDLHFGN) carry the 'HIGH' region motif. The Zn(2+) site is built by Cys92, Cys94, Tyr113, and Cys117. Residues Tyr180 and Arg198 each coordinate L-glutamate. A 'KMSKS' region motif is present at residues 236–240 (RLAKR). Lys239 lines the ATP pocket.

Belongs to the class-I aminoacyl-tRNA synthetase family. GluQ subfamily. The cofactor is Zn(2+).

Catalyzes the tRNA-independent activation of glutamate in presence of ATP and the subsequent transfer of glutamate onto a tRNA(Asp). Glutamate is transferred on the 2-amino-5-(4,5-dihydroxy-2-cyclopenten-1-yl) moiety of the queuosine in the wobble position of the QUC anticodon. The protein is Glutamyl-Q tRNA(Asp) synthetase of Corynebacterium glutamicum (strain ATCC 13032 / DSM 20300 / JCM 1318 / BCRC 11384 / CCUG 27702 / LMG 3730 / NBRC 12168 / NCIMB 10025 / NRRL B-2784 / 534).